Here is a 130-residue protein sequence, read N- to C-terminus: Protein ApaG (130 aa).

The 125-residue stretch at 3 to 127 folds into the ApaG domain; sequence SAVTQDIQIT…FSLDSPFVRR (125 aa).

This chain is Protein ApaG, found in Methylocella silvestris (strain DSM 15510 / CIP 108128 / LMG 27833 / NCIMB 13906 / BL2).